The following is a 560-amino-acid chain: MNIDVATLLSQNDILLLFVVLALGLFIAKLRIGSFQLGSSIGVLITALFMGSLGYTFTADSLNIGFMLFIFCVGIEAGPNFFGIFLRDGKHYLLLVLVVLVSAVSLSFLTGHYFGLDYGLSTGMMAGALTATPVLVGAKDALNSGLAALPEGVDFSKVIDNLSVGYAFSYLIGLTSLILLARLLPKLQKQNLQDSAMQIAQERGIGSAGQRKVYLPIIRAYRVGQELIDWTDGKNLRELGIHRQTGCHIERIRRNGILANPDGDYILQQGDEIALVGYPDSHARLDSSFRNGKEVFDRNLLDLRIAEEEIVVKSDNIAGKRLSELNLSEYGCFLNRVVRAQIEMPIEHDIVLAKGDILQVSGEKSKVHYLADKIGFISIHSQVSDLLAFCSFFILGIMFGMITMSFGQVTFGLGNAVGLLISGITLGFLRANHPTFGYVPQGALNMTKNLGLLVFMVGIGLSAGGNINEYFSEDGLKVLAAAFIVSVIPVILAYLVGAYILNMNRALLIGAIIGARTCGPAMDVVNEHARSTIPALGYAGTYAIANILMTVAGTIMILLA.

Helical transmembrane passes span 8 to 28 (LLSQNDILLLFVVLALGLFIA), 37 to 57 (LGSSIGVLITALFMGSLGYTF), 66 to 86 (FMLFIFCVGIEAGPNFFGIFL), 94 to 114 (LLVLVVLVSAVSLSFLTGHYF), and 161 to 181 (NLSVGYAFSYLIGLTSLILLA). 2 consecutive RCK C-terminal domains span residues 203–292 (RGIG…FRNG) and 293–376 (KEVF…KIGF). Helical transmembrane passes span 386-406 (LLAFCSFFILGIMFGMITMSF), 409-429 (VTFGLGNAVGLLISGITLGFL), 451-471 (GLLVFMVGIGLSAGGNINEYF), 478-498 (VLAAAFIVSVIPVILAYLVGA), and 539-559 (AGTYAIANILMTVAGTIMILL).

It belongs to the AAE transporter (TC 2.A.81) family. YbjL subfamily.

It is found in the cell membrane. The chain is Putative transport protein VFMJ11_0927 from Aliivibrio fischeri (strain MJ11) (Vibrio fischeri).